The primary structure comprises 91 residues: Small ribosomal subunit protein uS19 (91 aa).

It belongs to the universal ribosomal protein uS19 family.

Protein S19 forms a complex with S13 that binds strongly to the 16S ribosomal RNA. In Bordetella avium (strain 197N), this protein is Small ribosomal subunit protein uS19.